Here is a 486-residue protein sequence, read N- to C-terminus: Cysteine--tRNA ligase (486 aa).

Residue C30 coordinates Zn(2+). The 'HIGH' region signature appears at 32 to 42 (PTVYDRAHLGN). Residues C221, H246, and E250 each coordinate Zn(2+). Residues 279–283 (KMSKS) carry the 'KMSKS' region motif. K282 lines the ATP pocket.

The protein belongs to the class-I aminoacyl-tRNA synthetase family. Monomer. Zn(2+) serves as cofactor.

It is found in the cytoplasm. It catalyses the reaction tRNA(Cys) + L-cysteine + ATP = L-cysteinyl-tRNA(Cys) + AMP + diphosphate. The protein is Cysteine--tRNA ligase of Cereibacter sphaeroides (strain ATCC 17029 / ATH 2.4.9) (Rhodobacter sphaeroides).